The following is a 94-amino-acid chain: Large ribosomal subunit protein bL25 (94 aa).

It belongs to the bacterial ribosomal protein bL25 family. As to quaternary structure, part of the 50S ribosomal subunit; part of the 5S rRNA/L5/L18/L25 subcomplex. Contacts the 5S rRNA. Binds to the 5S rRNA independently of L5 and L18.

Its function is as follows. This is one of the proteins that binds to the 5S RNA in the ribosome where it forms part of the central protuberance. The sequence is that of Large ribosomal subunit protein bL25 from Citrobacter koseri (strain ATCC BAA-895 / CDC 4225-83 / SGSC4696).